Reading from the N-terminus, the 395-residue chain is Acid ceramidase (395 aa).

An N-terminal signal peptide occupies residues 1–21; the sequence is MLGRSRLALVLLAAAVSCAVA. Residues cysteine 31 and cysteine 340 are joined by a disulfide bond. The active-site Nucleophile is the cysteine 143. N-linked (GlcNAc...) asparagine glycosylation is found at asparagine 173, asparagine 195, asparagine 259, asparagine 286, asparagine 342, and asparagine 348. The cysteines at positions 388 and 392 are disulfide-linked.

The protein belongs to the acid ceramidase family. In terms of assembly, heterodimer; disulfide-linked. The heterodimer is composed of the disulfide-linked alpha and beta chains produced by autocatalytic cleavage of the precursor. N-glycosylated. Post-translationally, proteolytically cleaved into two chains alpha and beta that remain associated via a disulfide bond. Cleavage gives rise to a conformation change that activates the enzyme. The same catalytic Cys residue mediates the autoproteolytic cleavage and subsequent hydrolysis of lipid substrates. The beta chain may undergo an additional C-terminal processing.

The protein localises to the lysosome. It localises to the secreted. It catalyses the reaction an N-acylsphing-4-enine + H2O = sphing-4-enine + a fatty acid. It carries out the reaction N-dodecanoylsphing-4-enine + H2O = dodecanoate + sphing-4-enine. The enzyme catalyses N-tetradecanoylsphing-4-enine + H2O = tetradecanoate + sphing-4-enine. The catalysed reaction is N-hexadecanoylsphing-4-enine + H2O = sphing-4-enine + hexadecanoate. It catalyses the reaction N-octadecanoylsphing-4-enine + H2O = sphing-4-enine + octadecanoate. It carries out the reaction N-dodecanoyl-(4R)-hydroxysphinganine + H2O = (4R)-hydroxysphinganine + dodecanoate. The enzyme catalyses N-(dodecanoyl)-sphinganine + H2O = dodecanoate + sphinganine. The catalysed reaction is N-(acetyl)-sphing-4-enine + H2O = sphing-4-enine + acetate. It catalyses the reaction N-(hexanoyl)sphing-4-enine + H2O = hexanoate + sphing-4-enine. It carries out the reaction N-octanoylsphing-4-enine + H2O = octanoate + sphing-4-enine. The enzyme catalyses N-(9Z-octadecenoyl)-sphing-4-enine + H2O = sphing-4-enine + (9Z)-octadecenoate. The catalysed reaction is N-dodecanoylethanolamine + H2O = dodecanoate + ethanolamine. It participates in lipid metabolism; sphingolipid metabolism. Functionally, lysosomal ceramidase that hydrolyzes sphingolipid ceramides into sphingosine and free fatty acids at acidic pH. Ceramides, sphingosine, and its phosphorylated form sphingosine-1-phosphate are bioactive lipids that mediate cellular signaling pathways regulating several biological processes including cell proliferation, apoptosis and differentiation. Has a higher catalytic efficiency towards C12-ceramides versus other ceramides. Also catalyzes the reverse reaction allowing the synthesis of ceramides from fatty acids and sphingosine. For the reverse synthetic reaction, the natural sphingosine D-erythro isomer is more efficiently utilized as a substrate compared to D-erythro-dihydrosphingosine and D-erythro-phytosphingosine, while the fatty acids with chain lengths of 12 or 14 carbons are the most efficiently used. Also has an N-acylethanolamine hydrolase activity. By regulating the levels of ceramides, sphingosine and sphingosine-1-phosphate in the epidermis, mediates the calcium-induced differentiation of epidermal keratinocytes. Also indirectly regulates tumor necrosis factor/TNF-induced apoptosis. By regulating the intracellular balance between ceramides and sphingosine, in adrenocortical cells, probably also acts as a regulator of steroidogenesis. This Macaca fascicularis (Crab-eating macaque) protein is Acid ceramidase.